Reading from the N-terminus, the 363-residue chain is Mannose-1-phosphate guanyltransferase (363 aa).

Belongs to the transferase hexapeptide repeat family.

The protein resides in the cytoplasm. The enzyme catalyses alpha-D-mannose 1-phosphate + GTP + H(+) = GDP-alpha-D-mannose + diphosphate. The protein operates within nucleotide-sugar biosynthesis; GDP-alpha-D-mannose biosynthesis; GDP-alpha-D-mannose from alpha-D-mannose 1-phosphate (GTP route): step 1/1. Functionally, involved in cell wall synthesis where it is required for glycosylation. Involved in cell cycle progression through cell-size checkpoint. Required for the correct assembly of the septum. This chain is Mannose-1-phosphate guanyltransferase (mpg1), found in Schizosaccharomyces pombe (strain 972 / ATCC 24843) (Fission yeast).